A 426-amino-acid polypeptide reads, in one-letter code: DNA damage-binding protein 2 (426 aa).

A compositionally biased stretch (basic and acidic residues) spans 1–11 (MAPRKRPENQK). Residues 1–33 (MAPRKRPENQKTPEVVVRPKSKRNRSPRELEPE) form a disordered region. Ser26 carries the post-translational modification Phosphoserine. Lys35 and Lys76 each carry N6-acetyllysine. Required for interaction with DDB1 stretches follow at residues 67-78 (SIVRALHQHKLG) and 86-97 (QQGLQQSFLNSL). WD repeat units follow at residues 115–150 (SLAW…TFIK), 158–193 (ITGM…LRVF), 202–237 (WFCS…LWNL), 243–286 (KVTH…SLPH), and 289–328 (PVNA…LIPH). The short motif at 255–273 (WLLATASVDQTVKIWDLRQ) is the DWD box element. The tract at residues 333-335 (FQH) is photolesion recognition. WD repeat units lie at residues 342–385 (SWHP…MYQL) and 395–419 (SLNE…VWSP).

It belongs to the WD repeat DDB2/WDR76 family. As to quaternary structure, component of the UV-DDB complex which includes DDB1 and DDB2. The UV-DDB complex interacts with monoubiquitinated histone H2A and binds to XPC via the DDB2 subunit. Component of the DCX (DDB1-CUL4-X-box) E3 ubiquitin-protein ligase complex DDB1-CUL4-ROC1 (also known as CUL4-DDB-ROC1 and CUL4-DDB-RBX1), which includes CUL4A or CUL4B, DDB1, DDB2 and RBX1. DDB2 may function as the substrate recognition module within this complex. The DDB1-CUL4-ROC1 complex may associate with the COP9 signalosome, and this inhibits the E3 ubiquitin-protein ligase activity of the complex. A large number of other DCX complexes may also exist in which an alternate substrate targeting subunit replaces DDB2. These targeting subunits are generally known as DCAF (DDB1- and CUL4-associated factor) or CDW (CUL4-DDB1-associated WD40-repeat) proteins. In terms of processing, phosphorylation by ABL1 negatively regulate UV-DDB activity. Post-translationally, ubiquitinated by CUL4A in response to UV irradiation. Ubiquitination appears to both impair DNA-binding and promotes ubiquitin-dependent proteolysis. Degradation of DDB2 at sites of DNA damage may be a prerequisite for their recognition by XPC and subsequent repair. CUL4A-mediated degradation appears to be promoted by ABL1. Ubiquitinated, leading to proteasomal degradation, and deubiquitinated by USP24. Deubiquitinated by USP44; leading to its stabilization on DNA lesions. In terms of processing, acetylated. Deacetylation by SIRT6 in response to UV stress facilitates nucleotide excision repair pathway (the NER pathway) transduction.

The protein localises to the nucleus. It is found in the chromosome. Its pathway is protein modification; protein ubiquitination. Protein, which is both involved in DNA repair and protein ubiquitination, as part of the UV-DDB complex and DCX (DDB1-CUL4-X-box) complexes, respectively. Core component of the UV-DDB complex (UV-damaged DNA-binding protein complex), a complex that recognizes UV-induced DNA damage and recruit proteins of the nucleotide excision repair pathway (the NER pathway) to initiate DNA repair. The UV-DDB complex preferentially binds to cyclobutane pyrimidine dimers (CPD), 6-4 photoproducts (6-4 PP), apurinic sites and short mismatches. Also functions as the substrate recognition module for the DCX (DDB2-CUL4-X-box) E3 ubiquitin-protein ligase complex DDB2-CUL4-ROC1 (also known as CUL4-DDB-ROC1 and CUL4-DDB-RBX1). The DDB2-CUL4-ROC1 complex may ubiquitinate histone H2A, histone H3 and histone H4 at sites of UV-induced DNA damage. The ubiquitination of histones may facilitate their removal from the nucleosome and promote subsequent DNA repair. The DDB2-CUL4-ROC1 complex also ubiquitinates XPC, which may enhance DNA-binding by XPC and promote NER. The DDB2-CUL4-ROC1 complex also ubiquitinates KAT7/HBO1 in response to DNA damage, leading to its degradation: recognizes KAT7/HBO1 following phosphorylation by ATR. The chain is DNA damage-binding protein 2 (DDB2) from Bos taurus (Bovine).